The sequence spans 46 residues: Large ribosomal subunit protein bL34c (46 aa).

This sequence belongs to the bacterial ribosomal protein bL34 family.

It localises to the plastid. It is found in the chloroplast. In Guillardia theta (Cryptophyte), this protein is Large ribosomal subunit protein bL34c (rpl34).